A 143-amino-acid chain; its full sequence is MKSYMAKPSDVERKWFVIDAEGKVLGRLASQIAKILMGKHKPTYTPHVDTGDFVVVINADKVVLTGKKLEDKYYKYYTGYPGGLKQIQYKKLMQTKPEFVIYHAVKGMLPKNRLGRRMIKRLKVYRGAEHKHQAQKPEKLDIE.

Belongs to the universal ribosomal protein uL13 family. As to quaternary structure, part of the 50S ribosomal subunit.

In terms of biological role, this protein is one of the early assembly proteins of the 50S ribosomal subunit, although it is not seen to bind rRNA by itself. It is important during the early stages of 50S assembly. This chain is Large ribosomal subunit protein uL13, found in Caldanaerobacter subterraneus subsp. tengcongensis (strain DSM 15242 / JCM 11007 / NBRC 100824 / MB4) (Thermoanaerobacter tengcongensis).